Reading from the N-terminus, the 853-residue chain is DNA mismatch repair protein MutS (853 aa).

614–621 (GPNMGGKS) lines the ATP pocket.

Belongs to the DNA mismatch repair MutS family.

Its function is as follows. This protein is involved in the repair of mismatches in DNA. It is possible that it carries out the mismatch recognition step. This protein has a weak ATPase activity. This chain is DNA mismatch repair protein MutS, found in Escherichia coli (strain K12 / MC4100 / BW2952).